The sequence spans 143 residues: Sec-independent protein translocase protein TatB (143 aa).

A helical transmembrane segment spans residues 2 to 22 (FGNIGWGEFMVLLVAALVILG). The interval 97-143 (FDKPGSVSFDKSNPGTKAVSADPSTPTAPQNKPLAAGERPPIDLDAT) is disordered.

This sequence belongs to the TatB family. In terms of assembly, the Tat system comprises two distinct complexes: a TatABC complex, containing multiple copies of TatA, TatB and TatC subunits, and a separate TatA complex, containing only TatA subunits. Substrates initially bind to the TatABC complex, which probably triggers association of the separate TatA complex to form the active translocon.

Its subcellular location is the cell membrane. In terms of biological role, part of the twin-arginine translocation (Tat) system that transports large folded proteins containing a characteristic twin-arginine motif in their signal peptide across membranes. Together with TatC, TatB is part of a receptor directly interacting with Tat signal peptides. TatB may form an oligomeric binding site that transiently accommodates folded Tat precursor proteins before their translocation. The polypeptide is Sec-independent protein translocase protein TatB (Rhodococcus opacus (strain B4)).